Reading from the N-terminus, the 254-residue chain is Putative epimerase LsrE (254 aa).

The chain crosses the membrane as a helical span at residues 14 to 34; it reads VALLASYPLSVGILAGQWIAL. 3 residues coordinate a divalent metal cation: His-50, Asp-52, and His-81. The active-site Proton acceptor is Asp-52. Residues His-81, 166 to 169, 199 to 201, and 221 to 222 each bind substrate; these read GYGS, DGS, and GS. Asp-199 contributes to the a divalent metal cation binding site. The Proton donor role is filled by Asp-199.

It belongs to the ribulose-phosphate 3-epimerase family. Requires a divalent metal cation as cofactor.

The protein resides in the cell membrane. In Salmonella choleraesuis (strain SC-B67), this protein is Putative epimerase LsrE (lsrE).